Consider the following 262-residue polypeptide: Polyamine aminopropyltransferase (262 aa).

Residues 1–249 (MWITQEITPY…DIHRAAFALP (249 aa)) enclose the PABS domain. Residue asparagine 29 participates in S-methyl-5'-thioadenosine binding. Spermidine is bound at residue aspartate 83. The active-site Proton acceptor is aspartate 155.

This sequence belongs to the spermidine/spermine synthase family. Homodimer or homotetramer.

It localises to the cytoplasm. The enzyme catalyses S-adenosyl 3-(methylsulfanyl)propylamine + putrescine = S-methyl-5'-thioadenosine + spermidine + H(+). It participates in amine and polyamine biosynthesis; spermidine biosynthesis; spermidine from putrescine: step 1/1. Catalyzes the irreversible transfer of a propylamine group from the amino donor S-adenosylmethioninamine (decarboxy-AdoMet) to putrescine (1,4-diaminobutane) to yield spermidine. The chain is Polyamine aminopropyltransferase from Helicobacter pylori (strain HPAG1).